We begin with the raw amino-acid sequence, 190 residues long: Orotate phosphoribosyltransferase (190 aa).

114-122 is a binding site for 5-phospho-alpha-D-ribose 1-diphosphate; sequence EDVITTGGS. 2 residues coordinate orotate: Thr-118 and Arg-146.

The protein belongs to the purine/pyrimidine phosphoribosyltransferase family. PyrE subfamily. As to quaternary structure, homodimer. Requires Mg(2+) as cofactor.

The enzyme catalyses orotidine 5'-phosphate + diphosphate = orotate + 5-phospho-alpha-D-ribose 1-diphosphate. The protein operates within pyrimidine metabolism; UMP biosynthesis via de novo pathway; UMP from orotate: step 1/2. In terms of biological role, catalyzes the transfer of a ribosyl phosphate group from 5-phosphoribose 1-diphosphate to orotate, leading to the formation of orotidine monophosphate (OMP). This chain is Orotate phosphoribosyltransferase, found in Pelotomaculum thermopropionicum (strain DSM 13744 / JCM 10971 / SI).